Consider the following 469-residue polypeptide: Actin-related protein 4 (469 aa).

A disordered region spans residues 104–136 (PERSTPPSKKGINISDDGDVPMEDDGNNNEDAT). Residues 119–136 (DDGDVPMEDDGNNNEDAT) show a composition bias toward acidic residues.

Belongs to the actin family. ARP4 subfamily. Component of the NuA4 histone acetyltransferase complex, of the INO80 chromatin remodeling complex, and of the SWR1 chromatin remodeling complex.

It localises to the nucleus. Its function is as follows. Chromatin interaction component of the NuA4 histone acetyltransferase complex which is involved in transcriptional activation of selected genes principally by acetylation of nucleosomal histone H4 and H2A. The NuA4 complex is also involved in DNA repair. Is required for NuA4 complex integrity. Component of the SWR1 complex which mediates the ATP-dependent exchange of histone H2A for the H2A variant H2A.Z leading to transcriptional regulation of selected genes by chromatin remodeling. Component of the INO80 complex which remodels chromatin by shifting nucleosomes and is involved in DNA repair. This chain is Actin-related protein 4 (arp-4), found in Neurospora crassa (strain ATCC 24698 / 74-OR23-1A / CBS 708.71 / DSM 1257 / FGSC 987).